Reading from the N-terminus, the 430-residue chain is Histidinol dehydrogenase (430 aa).

NAD(+) is bound by residues tyrosine 130, glutamine 191, and asparagine 214. Residues serine 237, glutamine 259, and histidine 262 each coordinate substrate. Zn(2+) contacts are provided by glutamine 259 and histidine 262. Residues glutamate 327 and histidine 328 each act as proton acceptor in the active site. Residues histidine 328, aspartate 361, glutamate 415, and histidine 420 each contribute to the substrate site. Aspartate 361 is a Zn(2+) binding site. Histidine 420 serves as a coordination point for Zn(2+).

Belongs to the histidinol dehydrogenase family. Zn(2+) serves as cofactor.

It carries out the reaction L-histidinol + 2 NAD(+) + H2O = L-histidine + 2 NADH + 3 H(+). It functions in the pathway amino-acid biosynthesis; L-histidine biosynthesis; L-histidine from 5-phospho-alpha-D-ribose 1-diphosphate: step 9/9. In terms of biological role, catalyzes the sequential NAD-dependent oxidations of L-histidinol to L-histidinaldehyde and then to L-histidine. The sequence is that of Histidinol dehydrogenase from Brucella suis biovar 1 (strain 1330).